The chain runs to 469 residues: Squamosa promoter-binding-like protein 3 (469 aa).

Positions 96–118 are disordered; it reads SAEEHDKNMDKGKSKVDDTGTSR. The segment covering 97 to 115 has biased composition (basic and acidic residues); the sequence is AEEHDKNMDKGKSKVDDTG. Residues 179–256 form an SBP-type zinc finger; sequence NPHCQVEGCN…HDHNARRRKP (78 aa). Residues Cys182, Cys187, Cys204, His207, Cys223, Cys226, His230, and Cys242 each contribute to the Zn(2+) site. The Bipartite nuclear localization signal signature appears at 239 to 255; sequence KRSCRRRLHDHNARRRK. Residues 446–469 form a disordered region; it reads NDDDEDHLQLPKPSYDNSHYDQMN. A compositionally biased stretch (polar residues) spans 460–469; it reads YDNSHYDQMN.

In terms of tissue distribution, ubiquitous.

It is found in the nucleus. Trans-acting factor that binds specifically to the consensus nucleotide sequence 5'-TNCGTACAA-3'. May be involved in panicle development. This chain is Squamosa promoter-binding-like protein 3 (SPL3), found in Oryza sativa subsp. indica (Rice).